Here is a 675-residue protein sequence, read N- to C-terminus: Methionine--tRNA ligase (675 aa).

The short motif at 15-25 (PYANGSIHLGH) is the 'HIGH' region element. C146, C149, C159, and C162 together coordinate Zn(2+). A 'KMSKS' region motif is present at residues 332 to 336 (KMSKS). K335 lines the ATP pocket. A tRNA-binding domain is found at 573–675 (DFAKVDMRIA…SGAQPGMQVK (103 aa)).

This sequence belongs to the class-I aminoacyl-tRNA synthetase family. MetG type 1 subfamily. As to quaternary structure, homodimer. Requires Zn(2+) as cofactor.

Its subcellular location is the cytoplasm. It catalyses the reaction tRNA(Met) + L-methionine + ATP = L-methionyl-tRNA(Met) + AMP + diphosphate. In terms of biological role, is required not only for elongation of protein synthesis but also for the initiation of all mRNA translation through initiator tRNA(fMet) aminoacylation. This chain is Methionine--tRNA ligase, found in Yersinia pseudotuberculosis serotype O:3 (strain YPIII).